The sequence spans 150 residues: Large ribosomal subunit protein bL9 (150 aa).

It belongs to the bacterial ribosomal protein bL9 family.

Binds to the 23S rRNA. This chain is Large ribosomal subunit protein bL9, found in Corynebacterium glutamicum (strain R).